The following is a 658-amino-acid chain: Integrator complex subunit 9 (658 aa).

1D-myo-inositol hexakisphosphate-binding residues include lysine 2 and phenylalanine 19. Lysine 58 is covalently cross-linked (Glycyl lysine isopeptide (Lys-Gly) (interchain with G-Cter in SUMO2)). Lysine 510 and arginine 511 together coordinate 1D-myo-inositol hexakisphosphate. The interval 548–574 (DNKHLLQPPPRPAQPTSGKKRKRVSDD) is disordered. A Nuclear localization signal motif is present at residues 566-570 (KKRKR).

This sequence belongs to the metallo-beta-lactamase superfamily. RNA-metabolizing metallo-beta-lactamase-like family. INTS9 subfamily. Component of the Integrator complex, composed of core subunits INTS1, INTS2, INTS3, INTS4, INTS5, INTS6, INTS7, INTS8, INTS9/RC74, INTS10, INTS11/CPSF3L, INTS12, INTS13, INTS14 and INTS15. The core complex associates with protein phosphatase 2A subunits PPP2CA and PPP2R1A, to form the Integrator-PP2A (INTAC) complex. INTS9 is part of the RNA endonuclease subcomplex, composed of INTS4, INTS9, INTS11 and inositol hexakisphosphate (InsP6). Interacts with WDR73; interaction is required for the assembly of the RNA endonuclease subcomplex in the cytoplasm. Interacts with BRAT1; interaction is required for the assembly of the RNA endonuclease subcomplex. Interacts with ESRRB, ESRRB is not a core component of the Integrator complex and this association is a bridge for the interaction with the multiprotein complex Integrator; attracts the transcriptional machinery.

The protein resides in the nucleus. It is found in the cytoplasm. Component of the integrator complex, a multiprotein complex that terminates RNA polymerase II (Pol II) transcription in the promoter-proximal region of genes. The integrator complex provides a quality checkpoint during transcription elongation by driving premature transcription termination of transcripts that are unfavorably configured for transcriptional elongation: the complex terminates transcription by (1) catalyzing dephosphorylation of the C-terminal domain (CTD) of Pol II subunit POLR2A/RPB1 and SUPT5H/SPT5, (2) degrading the exiting nascent RNA transcript via endonuclease activity and (3) promoting the release of Pol II from bound DNA. The integrator complex is also involved in terminating the synthesis of non-coding Pol II transcripts, such as enhancer RNAs (eRNAs), small nuclear RNAs (snRNAs), telomerase RNAs and long non-coding RNAs (lncRNAs). Mediates recruitment of cytoplasmic dynein to the nuclear envelope, probably as component of the integrator complex. The chain is Integrator complex subunit 9 from Homo sapiens (Human).